The chain runs to 20 residues: Cytochrome c oxidase subunit 8B, mitochondrial (20 aa).

Positions 1 to 20 (LSGKPAKXHLSVGEQAIAMT) are disordered.

It belongs to the cytochrome c oxidase VIII family. As to quaternary structure, component of the cytochrome c oxidase (complex IV, CIV), a multisubunit enzyme composed of 14 subunits. The complex is composed of a catalytic core of 3 subunits MT-CO1, MT-CO2 and MT-CO3, encoded in the mitochondrial DNA, and 11 supernumerary subunits COX4I, COX5A, COX5B, COX6A, COX6B, COX6C, COX7A, COX7B, COX7C, COX8 and NDUFA4, which are encoded in the nuclear genome. The complex exists as a monomer or a dimer and forms supercomplexes (SCs) in the inner mitochondrial membrane with NADH-ubiquinone oxidoreductase (complex I, CI) and ubiquinol-cytochrome c oxidoreductase (cytochrome b-c1 complex, complex III, CIII), resulting in different assemblies (supercomplex SCI(1)III(2)IV(1) and megacomplex MCI(2)III(2)IV(2)).

The protein localises to the mitochondrion inner membrane. Its pathway is energy metabolism; oxidative phosphorylation. Functionally, component of the cytochrome c oxidase, the last enzyme in the mitochondrial electron transport chain which drives oxidative phosphorylation. The respiratory chain contains 3 multisubunit complexes succinate dehydrogenase (complex II, CII), ubiquinol-cytochrome c oxidoreductase (cytochrome b-c1 complex, complex III, CIII) and cytochrome c oxidase (complex IV, CIV), that cooperate to transfer electrons derived from NADH and succinate to molecular oxygen, creating an electrochemical gradient over the inner membrane that drives transmembrane transport and the ATP synthase. Cytochrome c oxidase is the component of the respiratory chain that catalyzes the reduction of oxygen to water. Electrons originating from reduced cytochrome c in the intermembrane space (IMS) are transferred via the dinuclear copper A center (CU(A)) of subunit 2 and heme A of subunit 1 to the active site in subunit 1, a binuclear center (BNC) formed by heme A3 and copper B (CU(B)). The BNC reduces molecular oxygen to 2 water molecules using 4 electrons from cytochrome c in the IMS and 4 protons from the mitochondrial matrix. The chain is Cytochrome c oxidase subunit 8B, mitochondrial from Oncorhynchus mykiss (Rainbow trout).